Reading from the N-terminus, the 144-residue chain is 3-hydroxyacyl-[acyl-carrier-protein] dehydratase FabZ (144 aa).

The active site involves H48.

It belongs to the thioester dehydratase family. FabZ subfamily.

The protein resides in the cytoplasm. It carries out the reaction a (3R)-hydroxyacyl-[ACP] = a (2E)-enoyl-[ACP] + H2O. Involved in unsaturated fatty acids biosynthesis. Catalyzes the dehydration of short chain beta-hydroxyacyl-ACPs and long chain saturated and unsaturated beta-hydroxyacyl-ACPs. The protein is 3-hydroxyacyl-[acyl-carrier-protein] dehydratase FabZ of Bacillus anthracis (strain A0248).